Here is a 188-residue protein sequence, read N- to C-terminus: Transmembrane protein 160 (188 aa).

A mitochondrion-targeting transit peptide spans M1–R96. The tract at residues P25–V52 is disordered. The span at R29 to A38 shows a compositional bias: low complexity. Residue S48 is modified to Phosphoserine. The next 2 membrane-spanning stretches (helical) occupy residues F102–A122 and A135–L155.

It belongs to the TMEM160 family.

It localises to the mitochondrion inner membrane. The chain is Transmembrane protein 160 from Bos taurus (Bovine).